Consider the following 488-residue polypeptide: Cruciferin (488 aa).

An N-terminal signal peptide occupies residues Met-1–Ala-23. 2 disulfides stabilise this stretch: Cys-30–Cys-63 and Cys-105–Cys-305. Cupin type-1 domains are found at residues Leu-35–Gln-262 and Asp-311–Arg-460. Residues Gln-116 to Asp-163 are disordered. Residues Ser-121 to Gly-147 are compositionally biased toward gly residues. Over residues Gln-148 to Gly-160 the composition is skewed to low complexity.

The protein belongs to the 11S seed storage protein (globulins) family. In terms of assembly, hexamer; each subunit is composed of an acidic and a basic chain derived from a single precursor and linked by a disulfide bond.

Its subcellular location is the rough endoplasmic reticulum. This is a seed storage protein. The polypeptide is Cruciferin (CRUA) (Brassica napus (Rape)).